The primary structure comprises 426 residues: Pannexin-1 (426 aa).

Residues Met1–Cys40 lie on the Cytoplasmic side of the membrane. Cys40 is modified (S-nitrosocysteine). The chain crosses the membrane as a helical span at residues Ile41–Gly61. Topologically, residues Thr62–His106 are extracellular. 2 cysteine pairs are disulfide-bonded: Cys66/Cys264 and Cys84/Cys245. Residues Lys107–Trp127 form a helical membrane-spanning segment. At Arg128–Arg216 the chain is on the cytoplasmic side. Residue Tyr198 is modified to Phosphotyrosine. A helical membrane pass occupies residues Leu217–Ser237. Residues Ser238–Leu277 lie on the Extracellular side of the membrane. Residue Asn254 is glycosylated (N-linked (GlcNAc...) asparagine). A helical transmembrane segment spans residues Ile278–Phe298. At Arg299–Cys426 the chain is on the cytoplasmic side. Cys346 carries the S-nitrosocysteine modification. The disordered stretch occupies residues Glu407–Cys426.

Belongs to the pannexin family. Homoheptameric. S-nitrosylation inhibits channel currents and ATP release. Post-translationally, N-glycosylation plays a role in cell surface targeting. Glycosylation at its extracellular surface makes unlikely that two oligomers could dock to form an intercellular channel such as in gap junctions. Exists in three glycosylation states: non-glycosylated (GLY0), high-mannose glycosylated (GLY1), and fully mature glycosylated (GLY2). In terms of processing, cleaved by CASP3 and CASP7 during apoptosis. Cleavage opens the channel for the release of metabolites and induces plasma membrane permeability during apoptosis. Phosphorylated at Tyr-198 by SRC. Phosphorylation activates ATP release. Constitutively phosphorylated in vascular smooth muscle cells. In terms of tissue distribution, expressed in the eye, thyroid, prostate, kidney and liver. Abundantly expressed in the CNS, including hippocampus, olfactory bulb, cortex, cerebellum and white matter.

It localises to the cell membrane. Its subcellular location is the endoplasmic reticulum membrane. It catalyses the reaction Ca(2+)(in) = Ca(2+)(out). The enzyme catalyses ATP(in) = ATP(out). The catalysed reaction is K(+)(in) = K(+)(out). It carries out the reaction chloride(in) = chloride(out). It catalyses the reaction iodide(out) = iodide(in). The enzyme catalyses Na(+)(in) = Na(+)(out). The catalysed reaction is nitrate(in) = nitrate(out). It carries out the reaction L-aspartate(out) = L-aspartate(in). It catalyses the reaction L-glutamate(out) = L-glutamate(in). The enzyme catalyses D-gluconate(in) = D-gluconate(out). The catalysed reaction is spermidine(in) = spermidine(out). In terms of biological role, ion channel involved in a variety of physiological functions such as blood pressure regulation, apoptotic cell clearance and oogenesis. Forms anion-selective channels with relatively low conductance and an order of permeabilities: nitrate&gt;iodide&gt;chlroride&gt;&gt;aspartate=glutamate=gluconate. Can release ATP upon activation through phosphorylation or cleavage at C-terminus. May play a role as a Ca(2+)-leak channel to regulate ER Ca(2+) homeostasis. Its function is as follows. During apoptosis, the C terminal tail is cleaved by caspases, which opens the main pore acting as a large-pore ATP efflux channel with a broad distribution, which allows the regulated release of molecules and ions smaller than 1 kDa, such as nucleotides ATP and UTP, and selective plasma membrane permeability to attract phagocytes that engulf the dying cells. This chain is Pannexin-1 (Panx1), found in Rattus norvegicus (Rat).